The primary structure comprises 463 residues: Steroidogenic factor 1 (463 aa).

Positions 10–85 (DELCPVCGDK…VGMRLEAVRA (76 aa)) form a DNA-binding region, nuclear receptor. The segment at 13 to 33 (CPVCGDKVSGYHYGLLTCESC) adopts an NR C4-type zinc-finger fold. Lys-34, Lys-38, and Lys-72 each carry N6-acetyllysine. Residues 49–73 (CTESQNCKIDKTQRKRCPYCRFQKC) form an NR C4-type zinc finger. Residue Lys-119 forms a Glycyl lysine isopeptide (Lys-Gly) (interchain with G-Cter in SUMO) linkage. The segment at 119–160 (KLETGPSMGPPPQTDYPLAPALHPGAKGLAPAPPAGPPGDYE) is disordered. A compositionally biased stretch (low complexity) spans 135 to 148 (PLAPALHPGAKGLA). A Glycyl lysine isopeptide (Lys-Gly) (interchain with G-Cter in SUMO) cross-link involves residue Lys-193. Positions 197-216 (PEPYASPHEPAPPYGYPEPY) are disordered. Phosphoserine; by CDK7 is present on Ser-202. Residues 205–216 (EPAPPYGYPEPY) show a composition bias toward pro residues. In terms of domain architecture, NR LBD spans 224 to 461 (GVPELILKLL…NLLIEMLHAK (238 aa)). Residues Gly-343, Tyr-438, and Lys-442 each coordinate a 1,2-diacyl-sn-glycero-3-phosphocholine.

It belongs to the nuclear hormone receptor family. NR5 subfamily. Binds DNA as a monomer. Part of a complex consisting of SFPQ, NONO and NR5A1. Interacts with NR0B2, NCOA2 and PPARGC1A. Interacts with DGKQ and CDK7. Binds to and activated by HIPK3. In terms of processing, acetylation stimulates the transcriptional activity. Sumoylation reduces CDK7-mediated phosphorylation on Ser-202. Post-translationally, phosphorylated on Ser-202 by CDK7. This phosphorylation promotes transcriptional activity. As to expression, expressed in the pre-granulosa and Sertoli cells of the ovary and testis, respectively. In the testis it is also present in the interstitial cells. In the adult ovary it is expressed in the interstitial gland, and in the granulosa cells and theca interna of small to medium-sized antral follicles, but is not expressed in large antral follicles.

The protein resides in the nucleus. Its function is as follows. Transcriptional activator. Seems to be essential for sexual differentiation and formation of the primary steroidogenic tissues. Binds to the Ad4 site found in the promoter region of steroidogenic P450 genes such as CYP11A, CYP11B and CYP21B. Also regulates the AMH/Muellerian inhibiting substance gene as well as the AHCH and STAR genes. 5'-YCAAGGYC-3' and 5'-RRAGGTCA-3' are the consensus sequences for the recognition by NR5A1. The SFPQ-NONO-NR5A1 complex binds to the CYP17 promoter and regulates basal and cAMP-dependent transcriptional activity. Binds phosphatidylcholine and phospholipids with a phosphatidylinositol (PI) headgroup, in particular PI(3,4)P2 and PI(3,4,5)P3. Activated by the phosphorylation of NR5A1 by HIPK3 leading to increased steroidogenic gene expression upon cAMP signaling pathway stimulation. The protein is Steroidogenic factor 1 (NR5A1) of Notamacropus eugenii (Tammar wallaby).